A 378-amino-acid chain; its full sequence is 3-dehydroquinate synthase (378 aa).

NAD(+)-binding positions include glycine 111–aspartate 115, threonine 135–serine 136, lysine 148, and lysine 157. The Zn(2+) site is built by glutamate 190, histidine 252, and histidine 271.

The protein belongs to the sugar phosphate cyclases superfamily. Dehydroquinate synthase family. NAD(+) serves as cofactor. It depends on Co(2+) as a cofactor. Zn(2+) is required as a cofactor.

It is found in the cytoplasm. It catalyses the reaction 7-phospho-2-dehydro-3-deoxy-D-arabino-heptonate = 3-dehydroquinate + phosphate. Its pathway is metabolic intermediate biosynthesis; chorismate biosynthesis; chorismate from D-erythrose 4-phosphate and phosphoenolpyruvate: step 2/7. Catalyzes the conversion of 3-deoxy-D-arabino-heptulosonate 7-phosphate (DAHP) to dehydroquinate (DHQ). The sequence is that of 3-dehydroquinate synthase from Mesorhizobium japonicum (strain LMG 29417 / CECT 9101 / MAFF 303099) (Mesorhizobium loti (strain MAFF 303099)).